The chain runs to 507 residues: ATP synthase subunit alpha, chloroplastic (507 aa).

Residue 170-177 (GDRQTGKT) participates in ATP binding.

Belongs to the ATPase alpha/beta chains family. As to quaternary structure, F-type ATPases have 2 components, CF(1) - the catalytic core - and CF(0) - the membrane proton channel. CF(1) has five subunits: alpha(3), beta(3), gamma(1), delta(1), epsilon(1). CF(0) has four main subunits: a, b, b' and c.

It is found in the plastid. The protein resides in the chloroplast thylakoid membrane. The enzyme catalyses ATP + H2O + 4 H(+)(in) = ADP + phosphate + 5 H(+)(out). In terms of biological role, produces ATP from ADP in the presence of a proton gradient across the membrane. The alpha chain is a regulatory subunit. The protein is ATP synthase subunit alpha, chloroplastic of Dioscorea elephantipes (Elephant's foot yam).